Consider the following 357-residue polypeptide: Putative diaminopimelate epimerase, chloroplastic (357 aa).

The transit peptide at 1-47 directs the protein to the chloroplast; that stretch reads MSSATAAATATIAAAAAAAAKLAATPAPAPSRRRLTLRGNPTARRCV. Catalysis depends on residues Cys145 and Cys300.

This sequence belongs to the diaminopimelate epimerase family.

The protein localises to the plastid. It localises to the chloroplast. The catalysed reaction is (2S,6S)-2,6-diaminopimelate = meso-2,6-diaminopimelate. It participates in amino-acid biosynthesis; L-lysine biosynthesis via DAP pathway; DL-2,6-diaminopimelate from LL-2,6-diaminopimelate: step 1/1. In Oryza sativa subsp. indica (Rice), this protein is Putative diaminopimelate epimerase, chloroplastic (DAPF).